A 719-amino-acid chain; its full sequence is Protein borderless (719 aa).

A signal peptide spans 1 to 33 (MPAKRSRTFRQSGSALLALLAIILLMNISCTSA). Topologically, residues 34–650 (ARDHRRQTNL…IDVPSQRKVR (617 aa)) are extracellular. 4 consecutive Ig-like domains span residues 40–128 (QTNL…CQVS), 134–241 (PSVR…AFLN), 246–334 (AKVI…PVIS), and 341–429 (PIFS…AELM). 4 disulfides stabilise this stretch: C55/C125, C172/C224, C267/C318, and C363/C413. Fibronectin type-III domains are found at residues 434 to 527 (APRA…TLPS) and 555 to 646 (APWN…VPSQ). Residues 651–671 (ALIIGSSVGVIFLLCALCAFL) traverse the membrane as a helical segment. Topologically, residues 672-719 (YVKRSCLRHLFAKDSSASEDEDTAESGDCDSDEQDQRDRDSIKIRQST) are cytoplasmic. The tract at residues 685–719 (DSSASEDEDTAESGDCDSDEQDQRDRDSIKIRQST) is disordered. Over residues 688–704 (ASEDEDTAESGDCDSDE) the composition is skewed to acidic residues. The span at 705–719 (QDQRDRDSIKIRQST) shows a compositional bias: basic and acidic residues.

It belongs to the immunoglobulin superfamily. As to quaternary structure, interacts with tutl. In terms of tissue distribution, in the visual system, expressed in lamina and medulla (at protein level).

Its subcellular location is the cell membrane. The protein localises to the cell projection. It localises to the axon. In terms of biological role, in the developing eye, has a role in axonal targeting of the R7 photoreceptor where it functions together with tutl. Probably mediates homotypic cell adhesion; the effect is inhibited by Lar. The sequence is that of Protein borderless from Drosophila melanogaster (Fruit fly).